The chain runs to 664 residues: Macoilin (664 aa).

4 helical membrane-spanning segments follow: residues 28-48, 75-95, 120-140, and 154-174; these read TFLYLKFLVVWALVLLADFVL, AFSVFFVCVAFTSNIICLLFI, VCLPTVSLWILFVYIEAAIRF, and FAAHCIGYPVVTLGFGFKSYV. Basic and acidic residues predominate over residues 253–265; it reads REKGKEKDKDAKK. The tract at residues 253–274 is disordered; the sequence is REKGKEKDKDAKKHNLGINNNN. Residue Ser305 is modified to Phosphoserine. Positions 320-348 are enriched in polar residues; that stretch reads KNYKNASGVVNSSPRSHSATNGSIPSSSS. Residues 320–375 form a disordered region; that stretch reads KNYKNASGVVNSSPRSHSATNGSIPSSSSKNEKKQKCTSKSPSTHKDLMENCIPNN. An N-linked (GlcNAc...) asparagine glycan is attached at Asn324. Ser332 is modified (phosphoserine). Asn340 and Asn452 each carry an N-linked (GlcNAc...) asparagine glycan. The interval 630–664 is disordered; sequence TSPLSPVSPHYSSKFVETSPSGLDPNASVYQPLKK. Ser631 and Ser634 each carry phosphoserine. N-linked (GlcNAc...) asparagine glycosylation is present at Asn655.

Belongs to the macoilin family.

Its subcellular location is the rough endoplasmic reticulum membrane. The protein localises to the nucleus membrane. Plays a role in the regulation of neuronal activity. The protein is Macoilin (MACO1) of Canis lupus familiaris (Dog).